Reading from the N-terminus, the 533-residue chain is Probable RNA-binding protein 46 (533 aa).

RRM domains lie at 61-139, 141-223, and 236-308; these read CEVF…VSLD, CRLF…WADP, and KVLY…LAKP. Positions 338–362 are disordered; that stretch reads ESHSKSLGKPPTLPTRLNGQHSPSP.

As to quaternary structure, interacts with YTHDC2, MEIOC, MOV10, CNOT6L, DDX4, UPF1 and PABPC1. As to expression, expressed in the testis and ovary (at protein level). Expressed in spermatogonia and spermatocytes in testis (at protein level).

The protein localises to the cytoplasm. Its function is as follows. Essential for male and female fertility, playing a crucial role in regulating germ cell development by ensuring the proper progression of meiosis prophase I. Regulates mitotic-to-meiotic transition in spermatogenesis by forming a complex with MEIOC and YTHDC2 which recognizes and down-regulates mitotic transcripts for a successful meiotic entry. Required for normal synaptonemal complex formation during meiosis, binding meiotic cohesin subunit mRNAs containing GCCUAU/GUUCGA motifs in their 3'UTRs regions and positively regulating their translation. Required for spermatogonial differentiation in both developing and adult testis. This is Probable RNA-binding protein 46 from Mus musculus (Mouse).